The sequence spans 492 residues: Lipopolysaccharide biosynthesis protein WzxC (492 aa).

Over Met1–Lys12 the chain is Cytoplasmic. Residues Trp13–Ala33 form a helical membrane-spanning segment. Topologically, residues Arg34–Gly42 are periplasmic. A helical membrane pass occupies residues Leu43–Ala63. The Cytoplasmic portion of the chain corresponds to Asn64–Tyr81. The chain crosses the membrane as a helical span at residues Trp82 to Ile102. Residues Gly103–Asp104 lie on the Periplasmic side of the membrane. The helical transmembrane segment at Val105–Ile125 threads the bilayer. Over Pro126 to Thr157 the chain is Cytoplasmic. A helical membrane pass occupies residues Cys158–Val178. The Periplasmic portion of the chain corresponds to Asn179–Arg236. The chain crosses the membrane as a helical span at residues Ile237–Pro257. Residues Met258–Lys288 lie on the Cytoplasmic side of the membrane. Residues Leu289–Asn309 form a helical membrane-spanning segment. The Periplasmic segment spans residues Asn310–Ser322. A helical membrane pass occupies residues Ile323–Ile343. The Cytoplasmic portion of the chain corresponds to Gly344–Thr364. A helical membrane pass occupies residues Phe365 to Leu385. Gly386 is a topological domain (periplasmic). A helical transmembrane segment spans residues Phe387–Leu407. Over Gly408–Ser417 the chain is Cytoplasmic. A helical membrane pass occupies residues Leu418–Val438. At Leu439–Leu445 the chain is on the periplasmic side. The chain crosses the membrane as a helical span at residues Gly446 to Leu466. The Cytoplasmic portion of the chain corresponds to Ser467–Gly492.

It belongs to the polysaccharide synthase family.

The protein localises to the cell inner membrane. The protein operates within bacterial outer membrane biogenesis; lipopolysaccharide biosynthesis. In Escherichia coli (strain K12), this protein is Lipopolysaccharide biosynthesis protein WzxC (wzxC).